Consider the following 324-residue polypeptide: Beta-ketoacyl-[acyl-carrier-protein] synthase III (324 aa).

Active-site residues include Cys-113 and His-251. The tract at residues 252 to 256 is ACP-binding; the sequence is QANKR. Residue Asn-281 is part of the active site.

Belongs to the thiolase-like superfamily. FabH family. Homodimer.

It localises to the cytoplasm. The enzyme catalyses malonyl-[ACP] + acetyl-CoA + H(+) = 3-oxobutanoyl-[ACP] + CO2 + CoA. It participates in lipid metabolism; fatty acid biosynthesis. Its function is as follows. Catalyzes the condensation reaction of fatty acid synthesis by the addition to an acyl acceptor of two carbons from malonyl-ACP. Catalyzes the first condensation reaction which initiates fatty acid synthesis and may therefore play a role in governing the total rate of fatty acid production. Possesses both acetoacetyl-ACP synthase and acetyl transacylase activities. Its substrate specificity determines the biosynthesis of branched-chain and/or straight-chain of fatty acids. This Bartonella henselae (strain ATCC 49882 / DSM 28221 / CCUG 30454 / Houston 1) (Rochalimaea henselae) protein is Beta-ketoacyl-[acyl-carrier-protein] synthase III.